The primary structure comprises 285 residues: Urease accessory protein UreD 1 (285 aa).

It belongs to the UreD family. As to quaternary structure, ureD, UreF and UreG form a complex that acts as a GTP-hydrolysis-dependent molecular chaperone, activating the urease apoprotein by helping to assemble the nickel containing metallocenter of UreC. The UreE protein probably delivers the nickel.

The protein localises to the cytoplasm. In terms of biological role, required for maturation of urease via the functional incorporation of the urease nickel metallocenter. In Pseudomonas syringae pv. tomato (strain ATCC BAA-871 / DC3000), this protein is Urease accessory protein UreD 1.